Consider the following 60-residue polypeptide: Potassium channel toxin alpha-KTx 3.6 (60 aa).

An N-terminal signal peptide occupies residues 1 to 22; the sequence is MKVFFAVLITLFICSMIIGIHG. 3 disulfides stabilise this stretch: cysteine 29/cysteine 49, cysteine 35/cysteine 54, and cysteine 39/cysteine 56. Position 59 is a lysine amide (lysine 59).

Belongs to the short scorpion toxin superfamily. Potassium channel inhibitor family. Alpha-KTx 03 subfamily. As to expression, expressed by the venom gland.

Its subcellular location is the secreted. In terms of biological role, blocks voltage-gated potassium channels. At 2 uM, blocks rat Kv1.1/KCNA1 and Kv1.3/KCNA3, has a strong effect on rat Kv1.2/KCNA2 and Kv1.6/KCNA6 as well as a moderate effect on Shaker IR. This Olivierus martensii (Manchurian scorpion) protein is Potassium channel toxin alpha-KTx 3.6.